Here is a 481-residue protein sequence, read N- to C-terminus: Glutamate--tRNA ligase (481 aa).

The 'HIGH' region motif lies at 11–21 (PSPTGLLHIGN). A 'KMSKS' region motif is present at residues 255-259 (KLSKR). Lysine 258 is an ATP binding site.

Belongs to the class-I aminoacyl-tRNA synthetase family. Glutamate--tRNA ligase type 1 subfamily. Monomer.

It is found in the cytoplasm. It carries out the reaction tRNA(Glu) + L-glutamate + ATP = L-glutamyl-tRNA(Glu) + AMP + diphosphate. In terms of biological role, catalyzes the attachment of glutamate to tRNA(Glu) in a two-step reaction: glutamate is first activated by ATP to form Glu-AMP and then transferred to the acceptor end of tRNA(Glu). This is Glutamate--tRNA ligase from Streptococcus pyogenes serotype M4 (strain MGAS10750).